A 526-amino-acid polypeptide reads, in one-letter code: ATP synthase subunit alpha (526 aa).

ATP is bound at residue 171–178; that stretch reads GDRQTGKT.

This sequence belongs to the ATPase alpha/beta chains family. As to quaternary structure, F-type ATPases have 2 components, CF(1) - the catalytic core - and CF(0) - the membrane proton channel. CF(1) has five subunits: alpha(3), beta(3), gamma(1), delta(1), epsilon(1). CF(0) has four main subunits: a(1), b(1), b'(1) and c(9-12).

Its subcellular location is the cell inner membrane. The enzyme catalyses ATP + H2O + 4 H(+)(in) = ADP + phosphate + 5 H(+)(out). In terms of biological role, produces ATP from ADP in the presence of a proton gradient across the membrane. The alpha chain is a regulatory subunit. The sequence is that of ATP synthase subunit alpha from Chlorobium chlorochromatii (strain CaD3).